The following is a 166-amino-acid chain: Macrocypin-5a (166 aa).

Positions 20–39 (NIPGGMYASSKDGKDEPVTA) are disordered.

It belongs to the protease inhibitor I85 family.

Functionally, inhibits papain and cysteine cathepsin endopeptidases, and also inhibits cathepsins B and H, which exhibit both exopeptidase and endopeptidase activities. The chain is Macrocypin-5a from Macrolepiota procera (Parasol mushroom).